A 325-amino-acid chain; its full sequence is Probable cell division protein WhiA (325 aa).

The H-T-H motif DNA-binding region spans 273–306 (SLEELGRLADPPMTKDAVAGRIRRLLSMADRKAK).

It belongs to the WhiA family.

Involved in cell division and chromosome segregation. The protein is Probable cell division protein WhiA of Mycobacterium bovis (strain BCG / Tokyo 172 / ATCC 35737 / TMC 1019).